The following is a 443-amino-acid chain: ATP-dependent protease ATPase subunit HslU (443 aa).

Residues Ile-18, 60 to 65, Asp-256, Glu-321, and Arg-393 contribute to the ATP site; that span reads GVGKTE.

The protein belongs to the ClpX chaperone family. HslU subfamily. In terms of assembly, a double ring-shaped homohexamer of HslV is capped on each side by a ring-shaped HslU homohexamer. The assembly of the HslU/HslV complex is dependent on binding of ATP.

Its subcellular location is the cytoplasm. Functionally, ATPase subunit of a proteasome-like degradation complex; this subunit has chaperone activity. The binding of ATP and its subsequent hydrolysis by HslU are essential for unfolding of protein substrates subsequently hydrolyzed by HslV. HslU recognizes the N-terminal part of its protein substrates and unfolds these before they are guided to HslV for hydrolysis. In Yersinia pestis bv. Antiqua (strain Antiqua), this protein is ATP-dependent protease ATPase subunit HslU.